The primary structure comprises 388 residues: Succinate--CoA ligase [ADP-forming] subunit beta (388 aa).

The region spanning 9–245 (KELLASYGLP…KSQENERELK (237 aa)) is the ATP-grasp domain. ATP is bound by residues K46, 53-55 (GRG), E100, Y103, and E108. Mg(2+)-binding residues include N200 and D214. Substrate-binding positions include N265 and 322-324 (GIV).

This sequence belongs to the succinate/malate CoA ligase beta subunit family. Heterotetramer of two alpha and two beta subunits. Requires Mg(2+) as cofactor.

It catalyses the reaction succinate + ATP + CoA = succinyl-CoA + ADP + phosphate. It carries out the reaction GTP + succinate + CoA = succinyl-CoA + GDP + phosphate. The protein operates within carbohydrate metabolism; tricarboxylic acid cycle; succinate from succinyl-CoA (ligase route): step 1/1. Succinyl-CoA synthetase functions in the citric acid cycle (TCA), coupling the hydrolysis of succinyl-CoA to the synthesis of either ATP or GTP and thus represents the only step of substrate-level phosphorylation in the TCA. The beta subunit provides nucleotide specificity of the enzyme and binds the substrate succinate, while the binding sites for coenzyme A and phosphate are found in the alpha subunit. The protein is Succinate--CoA ligase [ADP-forming] subunit beta of Neisseria meningitidis serogroup A / serotype 4A (strain DSM 15465 / Z2491).